The following is a 171-amino-acid chain: Large ribosomal subunit protein bL9 (171 aa).

It belongs to the bacterial ribosomal protein bL9 family.

Binds to the 23S rRNA. The sequence is that of Large ribosomal subunit protein bL9 from Rickettsia peacockii (strain Rustic).